Reading from the N-terminus, the 285-residue chain is Energy-coupling factor transporter ATP-binding protein EcfA2 (285 aa).

One can recognise an ABC transporter domain in the interval 3–245 (IKFKKVDYIY…RKWLKKHNLS (243 aa)). 40–47 (GHTGSGKS) lines the ATP pocket.

This sequence belongs to the ABC transporter superfamily. Energy-coupling factor EcfA family. As to quaternary structure, forms a stable energy-coupling factor (ECF) transporter complex composed of 2 membrane-embedded substrate-binding proteins (S component), 2 ATP-binding proteins (A component) and 2 transmembrane proteins (T component).

The protein localises to the cell membrane. ATP-binding (A) component of a common energy-coupling factor (ECF) ABC-transporter complex. Unlike classic ABC transporters this ECF transporter provides the energy necessary to transport a number of different substrates. The sequence is that of Energy-coupling factor transporter ATP-binding protein EcfA2 from Lactobacillus acidophilus (strain ATCC 700396 / NCK56 / N2 / NCFM).